The sequence spans 387 residues: ADP,ATP carrier protein 2, mitochondrial (387 aa).

A mitochondrion-targeting transit peptide spans 1–77; sequence MADQANQPTV…PVMPTPLFAN (77 aa). Solcar repeat units follow at residues 85–178, 190–282, and 290–376; these read KNFM…FKRL, KWFA…IKPV, and DNFF…LQIL. 5 helical membrane-spanning segments follow: residues 87-114, 155-179, 188-208, 258-279, and 293-313; these read FMIDFMMGGVSAAVSKTAAAPIERVKLL, TANVIRYFPTQALNFAFKDYFKRLF, YWKWFAGNLASGGAAGASSLF, FNISCVGIIVYRGLYFGLYDSI, and FASFALGWLITNGAGLASYPI. ADP-binding residues include arginine 160 and lysine 172. ADP is bound at residue arginine 317. Residues 317–322 are important for transport activity; the sequence is RRRMMM. Positions 317-322 match the Nucleotide carrier signature motif motif; that stretch reads RRRMMM. The helical transmembrane segment at 353-373 threads the bilayer; the sequence is AGANILRAIAGAGVLSGYDQL.

The protein belongs to the mitochondrial carrier (TC 2.A.29) family. In terms of assembly, monomer.

The protein resides in the mitochondrion inner membrane. The catalysed reaction is ADP(in) + ATP(out) = ADP(out) + ATP(in). Its activity is regulated as follows. The matrix-open state (m-state) is inhibited by the membrane-permeable bongkrekic acid (BKA). The cytoplasmic-open state (c-state) is inhibited by the membrane-impermeable toxic inhibitor carboxyatractyloside (CATR). In terms of biological role, ADP:ATP antiporter that mediates import of ADP into the mitochondrial matrix for ATP synthesis, and export of ATP out to fuel the cell. Cycles between the cytoplasmic-open state (c-state) and the matrix-open state (m-state): operates by the alternating access mechanism with a single substrate-binding site intermittently exposed to either the cytosolic (c-state) or matrix (m-state) side of the inner mitochondrial membrane. The sequence is that of ADP,ATP carrier protein 2, mitochondrial (ANT2) from Zea mays (Maize).